The chain runs to 608 residues: Elongation factor 4 (608 aa).

Residues 11–193 (KKIRNFSIIA…QIVEKVPEPS (183 aa)) enclose the tr-type G domain. Residues 23 to 28 (DHGKST) and 140 to 143 (NKID) each bind GTP.

Belongs to the TRAFAC class translation factor GTPase superfamily. Classic translation factor GTPase family. LepA subfamily.

The protein resides in the cell membrane. The enzyme catalyses GTP + H2O = GDP + phosphate + H(+). Functionally, required for accurate and efficient protein synthesis under certain stress conditions. May act as a fidelity factor of the translation reaction, by catalyzing a one-codon backward translocation of tRNAs on improperly translocated ribosomes. Back-translocation proceeds from a post-translocation (POST) complex to a pre-translocation (PRE) complex, thus giving elongation factor G a second chance to translocate the tRNAs correctly. Binds to ribosomes in a GTP-dependent manner. This is Elongation factor 4 from Listeria monocytogenes serotype 4b (strain CLIP80459).